Here is a 62-residue protein sequence, read N- to C-terminus: UPF0434 protein RL4569 (62 aa).

It belongs to the UPF0434 family.

The chain is UPF0434 protein RL4569 from Rhizobium johnstonii (strain DSM 114642 / LMG 32736 / 3841) (Rhizobium leguminosarum bv. viciae).